Consider the following 242-residue polypeptide: Adenylate kinase 1 (242 aa).

ATP-binding positions include 38–43 and glycine 42; that span reads GSGKGT. Residues 58–87 form an NMP region; the sequence is STGDLLREAAEKKTELGLKIKNIINEGKLV. AMP is bound by residues threonine 59, arginine 64, 85-87, glycine 113, 113-116, and glutamine 120; these read KLV and GYPR. Residues 154 to 191 are LID; that stretch reads GRLIHKPSGRIYHKIFNPPKVPFRDDVTNEPLIQREDD. ATP-binding residues include arginine 155 and tyrosine 165. Arginine 199 contributes to the AMP binding site. Alanine 229 is an ATP binding site.

Belongs to the adenylate kinase family.

It is found in the cytoplasm. The enzyme catalyses AMP + ATP = 2 ADP. Its activity is regulated as follows. Inhibited by the dinucleoside pentaphosphate compound P1,P5-di(adenosine-5') pentaphosphate (AP5A). In terms of biological role, catalyzes the reversible transfer of the terminal phosphate group between ATP and AMP. Has very low activity with CTP, GTP, ITP and UTP and no activity with GMP, CMP, UMP or IMP in vitro. The chain is Adenylate kinase 1 from Plasmodium falciparum (isolate 3D7).